The following is a 281-amino-acid chain: MDRYAVVGNPIAHSKSPQIHAAFAHQTGEALGYEAILAPLDGFVDTVLAFRAVGGRGMNVTVPFKLEAHALATRLTPRAAAAGAVNTLAFGGPETPDDILGDNTDGAGLVRDLTVNLGCPLHGRRVLLLGAGGAARGALLPLLEQAPAALTIANRTAAKAVELAAGFAAGHPGVAIDGGGFDALAGRRFDVVINATAASLADQAPPLPAGIYAEGALAYDMMYGRGDTPFLAAARADGAGRLADGLGMLVEQAAESFLLWRGVRPDTAPVLADLRARLAAA.

Residues 14-16 and threonine 61 each bind shikimate; that span reads SKS. The active-site Proton acceptor is lysine 65. Shikimate-binding residues include asparagine 86 and aspartate 105. NADP(+) is bound by residues 130 to 134, 154 to 159, and methionine 221; these read GAGGA and NRTAAK. A shikimate-binding site is contributed by tyrosine 223. Residue glycine 245 participates in NADP(+) binding.

The protein belongs to the shikimate dehydrogenase family. As to quaternary structure, homodimer.

The enzyme catalyses shikimate + NADP(+) = 3-dehydroshikimate + NADPH + H(+). The protein operates within metabolic intermediate biosynthesis; chorismate biosynthesis; chorismate from D-erythrose 4-phosphate and phosphoenolpyruvate: step 4/7. Its function is as follows. Involved in the biosynthesis of the chorismate, which leads to the biosynthesis of aromatic amino acids. Catalyzes the reversible NADPH linked reduction of 3-dehydroshikimate (DHSA) to yield shikimate (SA). The protein is Shikimate dehydrogenase (NADP(+)) of Azoarcus sp. (strain BH72).